Here is a 71-residue protein sequence, read N- to C-terminus: cAMP-dependent protein kinase inhibitor beta (71 aa).

A disordered region spans residues 1–21 (MTDVESVISSFASSARAGRRN). Thr2 bears the Blocked amino end (Thr) mark. Ser35 carries the phosphoserine modification. Positions 51 to 71 (AKMKNEEKDQGQPKKPLDEDK) are disordered.

Belongs to the PKI family. Testis.

Functionally, extremely potent competitive inhibitor of cAMP-dependent protein kinase activity, this protein interacts with the catalytic subunit of the enzyme after the cAMP-induced dissociation of its regulatory chains. This Rattus norvegicus (Rat) protein is cAMP-dependent protein kinase inhibitor beta (Pkib).